Here is a 462-residue protein sequence, read N- to C-terminus: Serine--tRNA ligase, cytoplasmic (462 aa).

246-248 (TSE) is a binding site for L-serine. ATP contacts are provided by residues 279–281 (RRE) and valine 295. Glutamate 302 is a binding site for L-serine. Residue 366-369 (ELVS) participates in ATP binding. Threonine 404 serves as a coordination point for L-serine.

It belongs to the class-II aminoacyl-tRNA synthetase family. Type-1 seryl-tRNA synthetase subfamily. As to quaternary structure, homodimer. The tRNA molecule binds across the dimer.

Its subcellular location is the cytoplasm. It localises to the cytosol. The enzyme catalyses tRNA(Ser) + L-serine + ATP = L-seryl-tRNA(Ser) + AMP + diphosphate + H(+). Catalyzes the attachment of serine to tRNA(Ser) in a two-step reaction: serine is first activated by ATP to form Ser-AMP and then transferred to the acceptor end of tRNA(Ser). In Candida albicans (strain SC5314 / ATCC MYA-2876) (Yeast), this protein is Serine--tRNA ligase, cytoplasmic (SES1).